Reading from the N-terminus, the 174-residue chain is V-type proton ATPase catalytic subunit A (174 aa).

Belongs to the ATPase alpha/beta chains family. V-ATPase is a heteromultimeric enzyme made up of two complexes: the ATP-hydrolytic V1 complex and the proton translocation V0 complex. The V1 complex consists of three catalytic AB heterodimers that form a heterohexamer, three peripheral stalks each consisting of EG heterodimers, one central rotor including subunits D and F, and the regulatory subunits C and H. The proton translocation complex V0 consists of the proton transport subunit a, a ring of proteolipid subunits c9c'', rotary subunit d, subunits e and f, and the accessory subunits ATP6AP1/Ac45 and ATP6AP2/PRR. Interacts with the V0 complex V-ATPase subunit a4 ATP6V0A4. Interacts with WFS1. Interacts with alpha-crystallin B chain/CRYAB and with MTOR, forming a ternary complex.

The protein resides in the cytoplasm. It localises to the cytosol. Its subcellular location is the cytoplasmic vesicle. The protein localises to the secretory vesicle. It is found in the clathrin-coated vesicle membrane. The protein resides in the lysosome. The enzyme catalyses ATP + H2O + 4 H(+)(in) = ADP + phosphate + 5 H(+)(out). With respect to regulation, ATP hydrolysis occurs at the interface between the nucleotide-binding domains of subunits A and B. ATP hydrolysis triggers a conformational change in the subunits D and F, which induces a shift of subunit d. The c-ring is subsequently rotated and results in a continuous proton translocation across the membrane. Functionally, catalytic subunit of the V1 complex of vacuolar(H+)-ATPase (V-ATPase), a multisubunit enzyme composed of a peripheral complex (V1) that hydrolyzes ATP and a membrane integral complex (V0) that translocates protons. V-ATPase is responsible for acidifying and maintaining the pH of intracellular compartments and in some cell types, is targeted to the plasma membrane, where it is responsible for acidifying the extracellular environment. In aerobic conditions, involved in intracellular iron homeostasis, thus triggering the activity of Fe(2+) prolyl hydroxylase (PHD) enzymes, and leading to HIF1A hydroxylation and subsequent proteasomal degradation. May play a role in neurite development and synaptic connectivity. This Mesocricetus auratus (Golden hamster) protein is V-type proton ATPase catalytic subunit A.